The sequence spans 609 residues: UvrABC system protein C (609 aa).

One can recognise a GIY-YIG domain in the interval 19–97 (ASPGCYLWKS…IKKHNPRFNV (79 aa)). The 36-residue stretch at 208-243 (ESLVSDLNIKMSNASERLDFEKAARYRDMLQRIQNF) folds into the UVR domain.

The protein belongs to the UvrC family. Interacts with UvrB in an incision complex.

It is found in the cytoplasm. Functionally, the UvrABC repair system catalyzes the recognition and processing of DNA lesions. UvrC both incises the 5' and 3' sides of the lesion. The N-terminal half is responsible for the 3' incision and the C-terminal half is responsible for the 5' incision. This is UvrABC system protein C from Leptospira interrogans serogroup Icterohaemorrhagiae serovar Lai (strain 56601).